A 376-amino-acid polypeptide reads, in one-letter code: CC-adding tRNA nucleotidyltransferase (376 aa).

26 to 29 contributes to the CTP binding site; that stretch reads GAVR. Mg(2+) contacts are provided by aspartate 39 and aspartate 41. Residues 94–95, asparagine 99, 136–145, and arginine 176 contribute to the CTP site; these read RD and DPLRMLRAAR.

This sequence belongs to the tRNA nucleotidyltransferase/poly(A) polymerase family. Requires Mg(2+) as cofactor.

The catalysed reaction is a tRNA precursor + 2 CTP = a tRNA with a 3' CC end + 2 diphosphate. In terms of biological role, tRNA nucleotidyltransferase involved in the synthesis of the tRNA CCA terminus. Adds the two cytidine residues to tRNA. The sequence is that of CC-adding tRNA nucleotidyltransferase from Shouchella clausii (strain KSM-K16) (Alkalihalobacillus clausii).